The following is a 204-amino-acid chain: Pre-mRNA leakage protein 1 (204 aa).

One can recognise an FHA domain in the interval 104–172; the sequence is YLVGRELGHS…NGTCLNNVVI (69 aa).

Belongs to the pre-mRNA retention and splicing (RES) complex composed of at least BUD13, IST3 and PML1.

Its subcellular location is the cytoplasm. It localises to the nucleus. Functionally, required for efficient splicing and pre-mRNA nuclear retention. The polypeptide is Pre-mRNA leakage protein 1 (PML1) (Saccharomyces cerevisiae (strain ATCC 204508 / S288c) (Baker's yeast)).